Reading from the N-terminus, the 488-residue chain is Metalloreductase STEAP3 (488 aa).

The Cytoplasmic segment spans residues 1 to 207 (MSGEMDKPLI…AREVEAIPLR (207 aa)). Serine 11, serine 17, and serine 20 each carry phosphoserine. NADP(+) contacts are provided by residues 36 to 39 (SGDF), 58 to 59 (SR), 91 to 98 (VFREHYSS), asparagine 116, and alanine 151. Residues tryptophan 152 and aspartate 160 each contribute to the FAD site. Residues 208–228 (LLPSWKVPTLLALGLFVCFYA) traverse the membrane as a helical segment. Tyrosine 229 contributes to the Fe(3+) binding site. Topologically, residues 229 to 258 (YNFIRDVLQPYIRKDENKFYKMPLSVVNTT) are vesicular. An N-linked (GlcNAc...) asparagine glycan is attached at asparagine 256. Residues 259 to 279 (LPCVAYVLLSLVYLPGVLAAA) form a helical membrane-spanning segment. One can recognise a Ferric oxidoreductase domain in the interval 259–407 (LPCVAYVLLS…LGFVALMLST (149 aa)). Residues 280 to 304 (LQLRRGTKYQRFPDWLDHWLQHRKQ) are Cytoplasmic-facing. FAD-binding residues include glutamine 281, arginine 302, and lysine 303. Residues 305–325 (IGLLSFFFAMLHALYSFCLPL) traverse the membrane as a helical segment. Histidine 316 contributes to the heme b binding site. Residue tyrosine 319 participates in Fe(3+) binding. Residues 326–358 (RRSHRYDLVNLAVKQVLANKSRLWVEEEVWRME) are Vesicular-facing. A helical membrane pass occupies residues 359–379 (IYLSLGVLALGMLSLLAVTSI). Serine 378 serves as a coordination point for FAD. Residues 380–390 (PSIANSLNWKE) lie on the Cytoplasmic side of the membrane. The chain crosses the membrane as a helical span at residues 391–411 (FSFVQSTLGFVALMLSTMHTL). Glutamine 395 serves as a coordination point for FAD. Histidine 409 contacts heme b. Topologically, residues 412–433 (TYGWTRAFEENHYKFYLPPTFT) are vesicular. Residues 434–454 (LTLLLPCVIILAKGLFLLPCL) traverse the membrane as a helical segment. Residues 455-488 (SHRLTKIRRGWERDGAVKFMLPAGHTQGEKTSHV) are Cytoplasmic-facing. Position 486 is a phosphoserine (serine 486).

Belongs to the STEAP family. As to quaternary structure, homodimer. Interacts with BNIP3L, MYT1, RHBDL4/RHBDD1 and TCTP. The cofactor is FAD. It depends on heme b as a cofactor. Proteolytically cleaved by RHBDL4/RHBDD1. RHBDL4/RHBDD1-induced cleavage occurs at multiple sites in a glycosylation-independent manner. Post-translationally, glycosylated.

It localises to the endosome membrane. It catalyses the reaction 2 Fe(2+) + NADP(+) + H(+) = 2 Fe(3+) + NADPH. The catalysed reaction is 2 Cu(+) + NADP(+) + H(+) = 2 Cu(2+) + NADPH. Functionally, integral membrane protein that functions as a NADPH-dependent ferric-chelate reductase, using NADPH from one side of the membrane to reduce a Fe(3+) chelate that is bound on the other side of the membrane. Mediates sequential transmembrane electron transfer from NADPH to FAD and onto heme, and finally to the Fe(3+) chelate. Can also reduce Cu(2+) to Cu(1+). Mediates efficient transferrin-dependent iron uptake in erythroid cells. May play a role downstream of p53/TP53 to interface apoptosis and cell cycle progression. Indirectly involved in exosome secretion by facilitating the secretion of proteins such as TCTP. The sequence is that of Metalloreductase STEAP3 (Steap3) from Rattus norvegicus (Rat).